A 62-amino-acid chain; its full sequence is UPF0291 protein CLI_2672 (62 aa).

It belongs to the UPF0291 family.

The protein localises to the cytoplasm. The polypeptide is UPF0291 protein CLI_2672 (Clostridium botulinum (strain Langeland / NCTC 10281 / Type F)).